Reading from the N-terminus, the 337-residue chain is Large ribosomal subunit protein uL3 (337 aa).

The segment at 1–29 (MARHHQPRKGSVAFSPRKRAARETPRVKS) is disordered.

This sequence belongs to the universal ribosomal protein uL3 family. Part of the 50S ribosomal subunit. Forms a cluster with proteins L14 and L24e.

Functionally, one of the primary rRNA binding proteins, it binds directly near the 3'-end of the 23S rRNA, where it nucleates assembly of the 50S subunit. This Methanothermobacter thermautotrophicus (strain ATCC 29096 / DSM 1053 / JCM 10044 / NBRC 100330 / Delta H) (Methanobacterium thermoautotrophicum) protein is Large ribosomal subunit protein uL3.